Consider the following 620-residue polypeptide: 1-deoxy-D-xylulose-5-phosphate synthase (620 aa).

Residues H75 and 116-118 contribute to the thiamine diphosphate site; that span reads AHS. D147 is a binding site for Mg(2+). Thiamine diphosphate contacts are provided by residues 148-149, N177, Y284, and E366; that span reads GA. N177 contributes to the Mg(2+) binding site.

This sequence belongs to the transketolase family. DXPS subfamily. In terms of assembly, homodimer. Mg(2+) serves as cofactor. Requires thiamine diphosphate as cofactor.

It carries out the reaction D-glyceraldehyde 3-phosphate + pyruvate + H(+) = 1-deoxy-D-xylulose 5-phosphate + CO2. It participates in metabolic intermediate biosynthesis; 1-deoxy-D-xylulose 5-phosphate biosynthesis; 1-deoxy-D-xylulose 5-phosphate from D-glyceraldehyde 3-phosphate and pyruvate: step 1/1. In terms of biological role, catalyzes the acyloin condensation reaction between C atoms 2 and 3 of pyruvate and glyceraldehyde 3-phosphate to yield 1-deoxy-D-xylulose-5-phosphate (DXP). This chain is 1-deoxy-D-xylulose-5-phosphate synthase, found in Bordetella avium (strain 197N).